Here is a 98-residue protein sequence, read N- to C-terminus: ESAT-6-like protein EsxJ (98 aa).

The protein belongs to the WXG100 family. CFP-10 subfamily.

Its subcellular location is the secreted. The sequence is that of ESAT-6-like protein EsxJ from Mycobacterium bovis (strain ATCC BAA-935 / AF2122/97).